A 374-amino-acid chain; its full sequence is MRYLITGGGTGGHIYPALSIARALTEQDPEAELLYVGTRTGREAAIVPQAGIAFAVISSGGVVNLGLLQRVRGGLRAARGLLEALGHIRRFRPDIVIGTGGFVAGPVLAAARLARVPLVIQEQNAFPGVTNRLAARWATAVFVPYEEARAHFPPGVRLIRAGNPVRPEIASASREAGRQALGLSERDRVLVIMGGSGGARDFNRVAAEAVLQLDVPGLRVVHITGERYFGQVKAQYGDRAPHVTLLPYAHNMPEVYAAADAGLFRAGALTLAEIQVRRLPSVLIPSPNVTHNHQEWNARTLERRGAAIVLREGGLTPADLAAALTRLLTDEALADRMRAALGEVADPDAARTIARRIVGIARQSREAREARRGR.

UDP-N-acetyl-alpha-D-glucosamine contacts are provided by residues Thr-10–Gly-12, Asn-124, Arg-166, Ser-196, and Gln-294.

The protein belongs to the glycosyltransferase 28 family. MurG subfamily.

It is found in the cell membrane. It catalyses the reaction di-trans,octa-cis-undecaprenyl diphospho-N-acetyl-alpha-D-muramoyl-L-alanyl-D-glutamyl-meso-2,6-diaminopimeloyl-D-alanyl-D-alanine + UDP-N-acetyl-alpha-D-glucosamine = di-trans,octa-cis-undecaprenyl diphospho-[N-acetyl-alpha-D-glucosaminyl-(1-&gt;4)]-N-acetyl-alpha-D-muramoyl-L-alanyl-D-glutamyl-meso-2,6-diaminopimeloyl-D-alanyl-D-alanine + UDP + H(+). The protein operates within cell wall biogenesis; peptidoglycan biosynthesis. Cell wall formation. Catalyzes the transfer of a GlcNAc subunit on undecaprenyl-pyrophosphoryl-MurNAc-pentapeptide (lipid intermediate I) to form undecaprenyl-pyrophosphoryl-MurNAc-(pentapeptide)GlcNAc (lipid intermediate II). The protein is UDP-N-acetylglucosamine--N-acetylmuramyl-(pentapeptide) pyrophosphoryl-undecaprenol N-acetylglucosamine transferase of Symbiobacterium thermophilum (strain DSM 24528 / JCM 14929 / IAM 14863 / T).